The primary structure comprises 168 residues: Cytochrome c oxidase subunit 2 (168 aa).

Residues 1–3 lie on the Cytoplasmic side of the membrane; that stretch reads MVD. The chain crosses the membrane as a helical span at residues 4-38; that stretch reads EHKAHKAILAYEKGWLAFSLAMLFVFIALIAYTLA. Residues 39-168 lie on the Periplasmic side of the membrane; sequence THTAGVIPAG…NMFGTIVVKE (130 aa). Histidine 114, cysteine 149, cysteine 153, and histidine 157 together coordinate Cu cation.

The protein belongs to the cytochrome c oxidase subunit 2 family.

The protein localises to the cell membrane. The enzyme catalyses 4 Fe(II)-[cytochrome c] + O2 + 8 H(+)(in) = 4 Fe(III)-[cytochrome c] + 2 H2O + 4 H(+)(out). In terms of biological role, subunits I and II form the functional core of the enzyme complex. Electrons originating in cytochrome c are transferred via heme a and Cu(A) to the binuclear center formed by heme a3 and Cu(B). This Thermus thermophilus (strain ATCC 27634 / DSM 579 / HB8) protein is Cytochrome c oxidase subunit 2 (cbaB).